Here is a 217-residue protein sequence, read N- to C-terminus: MMAAGPRTSLLLAFTLLCLPWTQVVGAFPAMSLSGLFANAVLRAQHLHQLAADTFKEFERTYIPEGQRYSIQNTQVAFCFSETIPAPTGKNEAQQKSDLELLRISLLLIQSWLGPLQFLSRVFTNSLVFGTSDRVYEKLKDLEEGILALMRELEDVTPRAGQILKQTYDKFDTNMRSDDALLKNYGLLSCFRKDLHKTETYLRVMKCRRFGEASCAF.

The N-terminal stretch at 1-27 is a signal peptide; sequence MMAAGPRTSLLLAFTLLCLPWTQVVGA. Histidine 46 is a Zn(2+) binding site. Cysteine 79 and cysteine 190 are disulfide-bonded. Serine 132 bears the Phosphoserine mark. Glutamate 199 is a Zn(2+) binding site. Cysteine 207 and cysteine 215 are disulfide-bonded.

It belongs to the somatotropin/prolactin family.

Its subcellular location is the secreted. In terms of biological role, plays an important role in growth control. Its major role in stimulating body growth is to stimulate the liver and other tissues to secrete IGF1. It stimulates both the differentiation and proliferation of myoblasts. It also stimulates amino acid uptake and protein synthesis in muscle and other tissues. In Capra hircus (Goat), this protein is Somatotropin (GH1).